A 251-amino-acid chain; its full sequence is Diphthine synthase (251 aa).

Residues leucine 9, aspartate 85, valine 88, 113–114, leucine 165, alanine 202, and histidine 227 each bind S-adenosyl-L-methionine; that span reads SI.

It belongs to the diphthine synthase family. In terms of assembly, homodimer.

The catalysed reaction is 2-[(3S)-amino-3-carboxypropyl]-L-histidyl-[translation elongation factor 2] + 3 S-adenosyl-L-methionine = diphthine-[translation elongation factor 2] + 3 S-adenosyl-L-homocysteine + 3 H(+). Its pathway is protein modification; peptidyl-diphthamide biosynthesis. S-adenosyl-L-methionine-dependent methyltransferase that catalyzes the trimethylation of the amino group of the modified target histidine residue in translation elongation factor 2 (EF-2), to form an intermediate called diphthine. The three successive methylation reactions represent the second step of diphthamide biosynthesis. The sequence is that of Diphthine synthase from Methanosphaerula palustris (strain ATCC BAA-1556 / DSM 19958 / E1-9c).